The chain runs to 472 residues: Aspartyl/glutamyl-tRNA(Asn/Gln) amidotransferase subunit B (472 aa).

This sequence belongs to the GatB/GatE family. GatB subfamily. In terms of assembly, heterotrimer of A, B and C subunits.

It carries out the reaction L-glutamyl-tRNA(Gln) + L-glutamine + ATP + H2O = L-glutaminyl-tRNA(Gln) + L-glutamate + ADP + phosphate + H(+). The catalysed reaction is L-aspartyl-tRNA(Asn) + L-glutamine + ATP + H2O = L-asparaginyl-tRNA(Asn) + L-glutamate + ADP + phosphate + 2 H(+). Functionally, allows the formation of correctly charged Asn-tRNA(Asn) or Gln-tRNA(Gln) through the transamidation of misacylated Asp-tRNA(Asn) or Glu-tRNA(Gln) in organisms which lack either or both of asparaginyl-tRNA or glutaminyl-tRNA synthetases. The reaction takes place in the presence of glutamine and ATP through an activated phospho-Asp-tRNA(Asn) or phospho-Glu-tRNA(Gln). The chain is Aspartyl/glutamyl-tRNA(Asn/Gln) amidotransferase subunit B from Campylobacter jejuni subsp. doylei (strain ATCC BAA-1458 / RM4099 / 269.97).